A 196-amino-acid polypeptide reads, in one-letter code: Small ribosomal subunit protein uS4m (196 aa).

The 67-residue stretch at 88 to 154 (KRLDVILVRL…FKSNIRKNFQ (67 aa)) folds into the S4 RNA-binding domain.

Belongs to the universal ribosomal protein uS4 family.

It is found in the mitochondrion. The sequence is that of Small ribosomal subunit protein uS4m (RPS4) from Marchantia polymorpha (Common liverwort).